Reading from the N-terminus, the 125-residue chain is Probable prefoldin subunit 6 (125 aa).

Belongs to the prefoldin subunit beta family. As to quaternary structure, heterohexamer of two PFD-alpha type and four PFD-beta type subunits.

Binds specifically to cytosolic chaperonin (c-CPN) and transfers target proteins to it. Binds to nascent polypeptide chain and promotes folding in an environment in which there are many competing pathways for nonnative proteins. In Drosophila melanogaster (Fruit fly), this protein is Probable prefoldin subunit 6.